The sequence spans 54 residues: Ribulose bisphosphate carboxylase large chain (54 aa).

Residues 1 to 2 (MS) constitute a propeptide that is removed on maturation. P3 carries the N-acetylproline modification. At K14 the chain carries N6,N6,N6-trimethyllysine.

The protein belongs to the RuBisCO large chain family. Type I subfamily. Heterohexadecamer of 8 large chains and 8 small chains.

It is found in the plastid. It localises to the chloroplast. The enzyme catalyses 2 (2R)-3-phosphoglycerate + 2 H(+) = D-ribulose 1,5-bisphosphate + CO2 + H2O. It carries out the reaction D-ribulose 1,5-bisphosphate + O2 = 2-phosphoglycolate + (2R)-3-phosphoglycerate + 2 H(+). Its function is as follows. RuBisCO catalyzes two reactions: the carboxylation of D-ribulose 1,5-bisphosphate, the primary event in carbon dioxide fixation, as well as the oxidative fragmentation of the pentose substrate in the photorespiration process. Both reactions occur simultaneously and in competition at the same active site. The sequence is that of Ribulose bisphosphate carboxylase large chain (rbcL) from Ilex ciliospinosa (Sichuan holly).